The sequence spans 115 residues: Glycine cleavage system H-like protein (115 aa).

The Lipoyl-binding domain maps to 17–99 (VVRLGLTEKM…EGEGWLAVVR (83 aa)). The residue at position 58 (Lys-58) is an N6-lipoyllysine.

This sequence belongs to the GcvH family. The cofactor is (R)-lipoate.

The polypeptide is Glycine cleavage system H-like protein (Chlamydia pneumoniae (Chlamydophila pneumoniae)).